The sequence spans 523 residues: Polypyrimidine tract-binding protein 3 (523 aa).

Positions 1 to 25 (MNSSTSAGVYANGNDNKKFKGDRPP) are disordered. 3 consecutive RRM domains span residues 30-114 (RVLH…NLPN), 153-229 (LRII…FSKL), and 329-403 (SVLL…LSKH). Lysine 36 is covalently cross-linked (Glycyl lysine isopeptide (Lys-Gly) (interchain with G-Cter in SUMO2)). Tyrosine 98 is modified (phosphotyrosine). Threonine 109 is subject to Phosphothreonine. Lysine 187 participates in a covalent cross-link: Glycyl lysine isopeptide (Lys-Gly) (interchain with G-Cter in SUMO2). N6-acetyllysine is present on lysine 394. Residues 406–426 (VQLPREGQEDQGLTKDFSNSP) are disordered. Serine 425 is subject to Phosphoserine. The region spanning 446–521 (ATLHLSNIPP…HHLRVSFSKS (76 aa)) is the RRM 4 domain.

As to quaternary structure, interacts with THBS4 (via the acidic amphipathic C-terminus).

RNA-binding protein that mediates pre-mRNA alternative splicing regulation. Plays a role in the regulation of cell proliferation, differentiation and migration. Positive regulator of EPO-dependent erythropoiesis. Participates in cell differentiation regulation by repressing tissue-specific exons. Promotes Fas exon 6 skipping. Binds RNA, preferentially to both poly(G) and poly(U). This chain is Polypyrimidine tract-binding protein 3 (Ptbp3), found in Mus musculus (Mouse).